A 158-amino-acid polypeptide reads, in one-letter code: 6,7-dimethyl-8-ribityllumazine synthase (158 aa).

Residues Phe-18, 50-52 (SYD), and 74-76 (AVI) each bind 5-amino-6-(D-ribitylamino)uracil. 79 to 80 (ET) serves as a coordination point for (2S)-2-hydroxy-3-oxobutyl phosphate. His-82 serves as the catalytic Proton donor. Leu-107 contributes to the 5-amino-6-(D-ribitylamino)uracil binding site. A (2S)-2-hydroxy-3-oxobutyl phosphate-binding site is contributed by Arg-122.

Belongs to the DMRL synthase family.

It carries out the reaction (2S)-2-hydroxy-3-oxobutyl phosphate + 5-amino-6-(D-ribitylamino)uracil = 6,7-dimethyl-8-(1-D-ribityl)lumazine + phosphate + 2 H2O + H(+). The protein operates within cofactor biosynthesis; riboflavin biosynthesis; riboflavin from 2-hydroxy-3-oxobutyl phosphate and 5-amino-6-(D-ribitylamino)uracil: step 1/2. Catalyzes the formation of 6,7-dimethyl-8-ribityllumazine by condensation of 5-amino-6-(D-ribitylamino)uracil with 3,4-dihydroxy-2-butanone 4-phosphate. This is the penultimate step in the biosynthesis of riboflavin. The chain is 6,7-dimethyl-8-ribityllumazine synthase from Sulfolobus acidocaldarius (strain ATCC 33909 / DSM 639 / JCM 8929 / NBRC 15157 / NCIMB 11770).